The primary structure comprises 325 residues: Thiamine-monophosphate kinase (325 aa).

Mg(2+)-binding residues include Asp-30, Ser-45, Thr-46, and Asp-47. A substrate-binding site is contributed by His-54. Residues Asp-75 and Asp-122 each contribute to the Mg(2+) site. Residues 121 to 122 and Arg-146 contribute to the ATP site; that span reads GD. A Mg(2+)-binding site is contributed by Asp-212. Position 214 (Ser-214) interacts with ATP. A Mg(2+)-binding site is contributed by Asp-215. Residues Glu-263 and Tyr-319 each coordinate substrate.

It belongs to the thiamine-monophosphate kinase family.

It catalyses the reaction thiamine phosphate + ATP = thiamine diphosphate + ADP. It functions in the pathway cofactor biosynthesis; thiamine diphosphate biosynthesis; thiamine diphosphate from thiamine phosphate: step 1/1. Catalyzes the ATP-dependent phosphorylation of thiamine-monophosphate (TMP) to form thiamine-pyrophosphate (TPP), the active form of vitamin B1. The chain is Thiamine-monophosphate kinase (thiL) from Salmonella typhimurium (strain LT2 / SGSC1412 / ATCC 700720).